We begin with the raw amino-acid sequence, 1089 residues long: Pentatricopeptide repeat-containing protein MRL1, chloroplastic (1089 aa).

The N-terminal 72 residues, 1 to 72 (MEVTSTTFIS…SIRSPRLVVR (72 aa)), are a transit peptide targeting the chloroplast. PPR repeat units lie at residues 466–500 (TMST…GMTA), 501–535 (DCKL…GVEA), 536–570 (NLHT…NVKP), 571–605 (DRVV…THPI), 608–642 (DHIS…GIRG), 643–677 (TPEV…DVTP), 678–712 (DEVF…GIRL), 713–747 (GTIS…KLRP), 748–782 (TIST…GLKP), and 783–817 (NTIT…GVSP).

Belongs to the PPR family. P subfamily. Expressed in stems, leaves and sepals.

The protein resides in the plastid. Its subcellular location is the chloroplast. Regulator of the large subunit (LS) of RuBisCO. Involved either in the processing or in the stabilization of the processed transcript, probably by acting as a barrier to the 5'&gt;3' degradation. The polypeptide is Pentatricopeptide repeat-containing protein MRL1, chloroplastic (MRL1) (Arabidopsis thaliana (Mouse-ear cress)).